We begin with the raw amino-acid sequence, 972 residues long: Protein NRDE2 homolog (972 aa).

The span at 1–17 (MPSNHNTSVPKFSSFNS) shows a compositional bias: polar residues. The disordered stretch occupies residues 1 to 61 (MPSNHNTSVP…RSIQSNFAVD (61 aa)). Residues 19–33 (KAKKNPITKSNKKYR) show a composition bias toward basic residues. The segment covering 37–59 (DQVSSNHAKSSFPSHRSIQSNFA) has biased composition (polar residues). HAT repeat units follow at residues 159–191 (LNIL…YQER), 250–282 (WSKE…YFTG), 318–350 (TDVT…YELA), 355–386 (QANM…FWNS), 608–640 (EEKP…LEHL), 788–820 (YNLP…FESK), and 860–894 (TNSQ…ILNL). Position 970 is a phosphoserine (Ser-970).

The protein belongs to the NRDE2 family.

Its subcellular location is the nucleus. In Schizosaccharomyces pombe (strain 972 / ATCC 24843) (Fission yeast), this protein is Protein NRDE2 homolog.